A 773-amino-acid polypeptide reads, in one-letter code: Cytochrome c oxidase subunit 1+2 (773 aa).

Positions 1-491 (MKLLEIYDKQ…LIASYGSLIT (491 aa)) are COX1. A helical transmembrane segment spans residues 41–61 (TMYITFSIFAGIIGTLLSLVI). Glutamate 64 contributes to the Ca(2+) binding site. Position 85 (histidine 85) interacts with Fe(II)-heme a. The next 6 membrane-spanning stretches (helical) occupy residues 87-111 (LIMI…NWFL), 130-150 (LWLI…GIGA), 173-193 (VGIL…INFL), 211-231 (LFVW…PVLA), 262-278 (LFHP…FGII), and 290-310 (IFGV…GFLV). Histidine 264 serves as a coordination point for Cu cation. The 1'-histidyl-3'-tyrosine (His-Tyr) cross-link spans 264-268 (HPEVY). O2 is bound at residue tyrosine 268. Residues histidine 314 and histidine 315 each contribute to the Cu cation site. Helical transmembrane passes span 335–355 (IIAI…WGGV) and 362–382 (MLFV…GVVL). Histidine 392 and aspartate 393 together coordinate Mg(2+). 5 consecutive transmembrane segments (helical) span residues 396–416 (YVVA…IFAG), 444–464 (FWTM…LGLA), 483–503 (IASY…VNIF), 555–575 (IFFY…RILW), and 604–624 (GTVI…LIAI). Histidine 400 serves as a coordination point for heme a3. Histidine 402 contributes to the Fe(II)-heme a binding site. Residues 492 to 773 (AFGLLFFFVN…VQEYLGRLYK (282 aa)) form a COX2 region. Positions 709, 744, 748, and 752 each coordinate Cu cation.

The protein in the N-terminal section; belongs to the heme-copper respiratory oxidase family. It in the C-terminal section; belongs to the cytochrome c oxidase subunit 2 family. In terms of assembly, component of the cytochrome c oxidase (complex IV, CIV), a multisubunit enzyme composed of a catalytic core of 3 subunits and several supernumerary subunits. The complex exists as a monomer or a dimer and forms supercomplexes (SCs) in the inner mitochondrial membrane with ubiquinol-cytochrome c oxidoreductase (cytochrome b-c1 complex, complex III, CIII). It depends on heme as a cofactor. Requires Cu cation as cofactor.

Its subcellular location is the mitochondrion inner membrane. It carries out the reaction 4 Fe(II)-[cytochrome c] + O2 + 8 H(+)(in) = 4 Fe(III)-[cytochrome c] + 2 H2O + 4 H(+)(out). The protein operates within energy metabolism; oxidative phosphorylation. Functionally, component of the cytochrome c oxidase, the last enzyme in the mitochondrial electron transport chain which drives oxidative phosphorylation. The respiratory chain contains 3 multisubunit complexes succinate dehydrogenase (complex II, CII), ubiquinol-cytochrome c oxidoreductase (cytochrome b-c1 complex, complex III, CIII) and cytochrome c oxidase (complex IV, CIV), that cooperate to transfer electrons derived from NADH and succinate to molecular oxygen, creating an electrochemical gradient over the inner membrane that drives transmembrane transport and the ATP synthase. Cytochrome c oxidase is the component of the respiratory chain that catalyzes the reduction of oxygen to water. Electrons originating from reduced cytochrome c in the intermembrane space (IMS) are transferred via the dinuclear copper A center (CU(A)) of subunit 2 and heme A of subunit 1 to the active site in subunit 1, a binuclear center (BNC) formed by heme A3 and copper B (CU(B)). The BNC reduces molecular oxygen to 2 water molecules using 4 electrons from cytochrome c in the IMS and 4 protons from the mitochondrial matrix. The protein is Cytochrome c oxidase subunit 1+2 (cox1/2) of Dictyostelium citrinum (Slime mold).